A 106-amino-acid chain; its full sequence is Pyrimidine/purine nucleoside phosphorylase (106 aa).

It belongs to the nucleoside phosphorylase PpnP family.

It carries out the reaction a purine D-ribonucleoside + phosphate = a purine nucleobase + alpha-D-ribose 1-phosphate. The catalysed reaction is adenosine + phosphate = alpha-D-ribose 1-phosphate + adenine. It catalyses the reaction cytidine + phosphate = cytosine + alpha-D-ribose 1-phosphate. The enzyme catalyses guanosine + phosphate = alpha-D-ribose 1-phosphate + guanine. It carries out the reaction inosine + phosphate = alpha-D-ribose 1-phosphate + hypoxanthine. The catalysed reaction is thymidine + phosphate = 2-deoxy-alpha-D-ribose 1-phosphate + thymine. It catalyses the reaction uridine + phosphate = alpha-D-ribose 1-phosphate + uracil. The enzyme catalyses xanthosine + phosphate = alpha-D-ribose 1-phosphate + xanthine. Its function is as follows. Catalyzes the phosphorolysis of diverse nucleosides, yielding D-ribose 1-phosphate and the respective free bases. Can use uridine, adenosine, guanosine, cytidine, thymidine, inosine and xanthosine as substrates. Also catalyzes the reverse reactions. The protein is Pyrimidine/purine nucleoside phosphorylase of Leptospira interrogans serogroup Icterohaemorrhagiae serovar copenhageni (strain Fiocruz L1-130).